We begin with the raw amino-acid sequence, 36 residues long: U-limacoditoxin(7)-Dv63 (36 aa).

Positions Met1–Phe19 are cleaved as a signal peptide.

The protein belongs to the limacoditoxin-7 family. Expressed by the venom secretory cell of the spine. The spine is a cuticular structure containing a single large nucleated venom-secreting cell at its base. It is an independent unit capable of producing, storing and injecting venom. On the back of D.vulnerans caterpillars, spines are grouped together by 50 to 100 to form scoli, of which there are eight in D.vulnerans.

Its subcellular location is the secreted. Peptide with insecticidal and antiparasitic activities. Induces irreversible paralysis in D.melanogaster when tested at high doses. It shows a moderate antiparasitic activity against the major pathogenic nematode of ruminants (H.contortus, EC(50)=41.3 uM). Does not show antimicrobial activities. Does not induce increase in intracellular calcium in mouse DRG neurons, suggesting that it does not induce pain. In Doratifera vulnerans (Mottled cup moth), this protein is U-limacoditoxin(7)-Dv63.